A 715-amino-acid polypeptide reads, in one-letter code: DNA ligase (715 aa).

Residues 47-51 (DADYD), 96-97 (SL), and E128 each bind NAD(+). The active-site N6-AMP-lysine intermediate is K130. NAD(+) is bound by residues R151, E188, K306, and K330. The Zn(2+) site is built by C435, C438, C453, and C459. One can recognise a BRCT domain in the interval 637-715 (RRDTAVAGKT…EDEWLALIGN (79 aa)).

Belongs to the NAD-dependent DNA ligase family. LigA subfamily. The cofactor is Mg(2+). It depends on Mn(2+) as a cofactor.

The enzyme catalyses NAD(+) + (deoxyribonucleotide)n-3'-hydroxyl + 5'-phospho-(deoxyribonucleotide)m = (deoxyribonucleotide)n+m + AMP + beta-nicotinamide D-nucleotide.. In terms of biological role, DNA ligase that catalyzes the formation of phosphodiester linkages between 5'-phosphoryl and 3'-hydroxyl groups in double-stranded DNA using NAD as a coenzyme and as the energy source for the reaction. It is essential for DNA replication and repair of damaged DNA. This is DNA ligase from Rhodopseudomonas palustris (strain ATCC BAA-98 / CGA009).